We begin with the raw amino-acid sequence, 721 residues long: BRCA1-A complex subunit RAP80 (721 aa).

The segment at 1-65 (MPRRKKKGKE…GLQKTKIKQS (65 aa)) is disordered. The necessary for transcriptional repression stretch occupies residues 1–101 (MPRRKKKGKE…SEQEAREVNS (101 aa)). Lys20 is covalently cross-linked (Glycyl lysine isopeptide (Lys-Gly) (interchain with G-Cter in SUMO2)). Ser29 bears the Phosphoserine mark. Lys31 participates in a covalent cross-link: Glycyl lysine isopeptide (Lys-Gly) (interchain with G-Cter in SUMO2). Ser44 and Ser46 each carry phosphoserine. The LR motif motif lies at 60–78 (TKIKQSSRAKCLAKRKIAQ). Glycyl lysine isopeptide (Lys-Gly) (interchain with G-Cter in SUMO2) cross-links involve residues Lys75 and Lys90. The region spanning 80–99 (TEEEQFALALKMSEQEAREV) is the UIM 1 domain. Residues 93–204 (EQEAREVNSQ…SVSSGSWDQS (112 aa)) form a disordered region. Positions 97–103 (REVNSQE) are UIM-linker. The segment at 100-200 (NSQEEEEEEL…EEPVSVSSGS (101 aa)) is necessary for interaction with NR6A1 N-terminus. Ser101 bears the Phosphoserine mark. A UIM 2 domain is found at 105-124 (EEEELLRKAIAESLNSCRPS). Over residues 117 to 130 (SLNSCRPSDASATR) the composition is skewed to polar residues. Position 140 is a phosphoserine (Ser140). Residues 194 to 204 (VSVSSGSWDQS) show a composition bias toward low complexity. Ser205 is modified (phosphoserine). Lys245 is covalently cross-linked (Glycyl lysine isopeptide (Lys-Gly) (interchain with G-Cter in SUMO2)). The interval 270–400 (TGGTVNYFWG…EEEPTTSHGQ (131 aa)) is AIR. Residues 334 to 369 (NECGQGEQASEKNEGISEDMGDEDKEERQESRASVW) are disordered. The segment covering 349 to 358 (ISEDMGDEDK) has biased composition (acidic residues). Residues Lys382 and Lys387 each participate in a glycyl lysine isopeptide (Lys-Gly) (interchain with G-Cter in SUMO2) cross-link. The disordered stretch occupies residues 391 to 418 (EEEPTTSHGQSSQGLFVEETSEEGNSVP). Positions 400–500 (QSSQGLFVEE…EIHTSTFSSS (101 aa)) are necessary for interaction with NR6A1 C-terminus. 2 positions are modified to phosphoserine: Ser402 and Ser420. Lys429 participates in a covalent cross-link: Glycyl lysine isopeptide (Lys-Gly) (interchain with G-Cter in SUMO2). Position 467 is a phosphoserine (Ser467). A UBZ4-type zinc finger spans residues 502–529 (QVSCPLCDQGFPPTKIERHAMYCNGLMG). 4 residues coordinate Zn(2+): Cys505, Cys508, His520, and Cys524. The zinc-finger-like region stretch occupies residues 505-582 (CPLCDQGFPP…REYQCHVESC (78 aa)). Residues Lys544, Lys559, Lys562, and Lys607 each participate in a glycyl lysine isopeptide (Lys-Gly) (interchain with G-Cter in SUMO2) cross-link. At Ser627 the chain carries Phosphoserine. Glycyl lysine isopeptide (Lys-Gly) (interchain with G-Cter in SUMO2) cross-links involve residues Lys635 and Lys642. Phosphoserine is present on residues Ser655 and Ser679. Glycyl lysine isopeptide (Lys-Gly) (interchain with G-Cter in SUMO2) cross-links involve residues Lys698 and Lys699.

Belongs to the RAP80 family. As to quaternary structure, component of the ARISC complex, at least composed of UIMC1/RAP80, ABRAXAS1, BRCC3/BRCC36, BABAM2 and BABAM1/NBA1. Component of the BRCA1-A complex, at least composed of the BRCA1, BARD1, UIMC1/RAP80, ABRAXAS1, BRCC3/BRCC36, BABAM2 and BABAM1/NBA1. In the BRCA1-A complex, interacts directly with ABRAXAS1. Interacts with UBE2I. Interacts with NR6A1. Interacts with ESR1. Interacts with TSP57. Interacts with TRAIP. In terms of processing, sumoylated. Phosphorylated upon DNA damage by ATM or ATR.

The protein localises to the nucleus. Its function is as follows. Ubiquitin-binding protein. Specifically recognizes and binds 'Lys-63'-linked ubiquitin. Plays a central role in the BRCA1-A complex by specifically binding 'Lys-63'-linked ubiquitinated histones H2A and H2AX at DNA lesions sites, leading to target the BRCA1-BARD1 heterodimer to sites of DNA damage at double-strand breaks (DSBs). The BRCA1-A complex also possesses deubiquitinase activity that specifically removes 'Lys-63'-linked ubiquitin on histones H2A and H2AX. Also weakly binds monoubiquitin but with much less affinity than 'Lys-63'-linked ubiquitin. May interact with monoubiquitinated histones H2A and H2B; the relevance of such results is however unclear in vivo. Does not bind Lys-48'-linked ubiquitin. May indirectly act as a transcriptional repressor by inhibiting the interaction of NR6A1 with the corepressor NCOR1. This chain is BRCA1-A complex subunit RAP80 (UIMC1), found in Sus scrofa (Pig).